Here is a 170-residue protein sequence, read N- to C-terminus: Probable chorismate pyruvate-lyase (170 aa).

Residues arginine 77, leucine 114, and glutamate 157 each contribute to the substrate site.

This sequence belongs to the UbiC family.

The protein resides in the cytoplasm. The catalysed reaction is chorismate = 4-hydroxybenzoate + pyruvate. It functions in the pathway cofactor biosynthesis; ubiquinone biosynthesis. Functionally, removes the pyruvyl group from chorismate, with concomitant aromatization of the ring, to provide 4-hydroxybenzoate (4HB) for the ubiquinone pathway. The polypeptide is Probable chorismate pyruvate-lyase (Pasteurella multocida (strain Pm70)).